The chain runs to 314 residues: Acetyl-coenzyme A carboxylase carboxyl transferase subunit alpha (314 aa).

The CoA carboxyltransferase C-terminal domain maps to 32-289 (EIDMLEASLE…KSAFVAQLDS (258 aa)).

The protein belongs to the AccA family. As to quaternary structure, acetyl-CoA carboxylase is a heterohexamer composed of biotin carboxyl carrier protein (AccB), biotin carboxylase (AccC) and two subunits each of ACCase subunit alpha (AccA) and ACCase subunit beta (AccD).

It is found in the cytoplasm. The catalysed reaction is N(6)-carboxybiotinyl-L-lysyl-[protein] + acetyl-CoA = N(6)-biotinyl-L-lysyl-[protein] + malonyl-CoA. It participates in lipid metabolism; malonyl-CoA biosynthesis; malonyl-CoA from acetyl-CoA: step 1/1. Functionally, component of the acetyl coenzyme A carboxylase (ACC) complex. First, biotin carboxylase catalyzes the carboxylation of biotin on its carrier protein (BCCP) and then the CO(2) group is transferred by the carboxyltransferase to acetyl-CoA to form malonyl-CoA. The chain is Acetyl-coenzyme A carboxylase carboxyl transferase subunit alpha from Staphylococcus aureus (strain JH9).